The chain runs to 465 residues: Ribulose bisphosphate carboxylase large chain (465 aa).

K4 carries the N6,N6,N6-trimethyllysine modification. Substrate contacts are provided by N113 and T163. K165 functions as the Proton acceptor in the catalytic mechanism. Substrate is bound at residue K167. K191, D193, and E194 together coordinate Mg(2+). K191 is subject to N6-carboxylysine. H284 functions as the Proton acceptor in the catalytic mechanism. Positions 285, 317, and 369 each coordinate substrate.

Belongs to the RuBisCO large chain family. Type I subfamily. Heterohexadecamer of 8 large chains and 8 small chains; disulfide-linked. The disulfide link is formed within the large subunit homodimers. It depends on Mg(2+) as a cofactor. In terms of processing, the disulfide bond which can form in the large chain dimeric partners within the hexadecamer appears to be associated with oxidative stress and protein turnover.

It is found in the plastid. It localises to the chloroplast. It catalyses the reaction 2 (2R)-3-phosphoglycerate + 2 H(+) = D-ribulose 1,5-bisphosphate + CO2 + H2O. It carries out the reaction D-ribulose 1,5-bisphosphate + O2 = 2-phosphoglycolate + (2R)-3-phosphoglycerate + 2 H(+). Its function is as follows. RuBisCO catalyzes two reactions: the carboxylation of D-ribulose 1,5-bisphosphate, the primary event in carbon dioxide fixation, as well as the oxidative fragmentation of the pentose substrate in the photorespiration process. Both reactions occur simultaneously and in competition at the same active site. The protein is Ribulose bisphosphate carboxylase large chain of Bursera inaguensis (Elaphrium inaguense).